A 760-amino-acid chain; its full sequence is DNA-directed RNA polymerase subunit beta' (760 aa).

Residues cysteine 76, cysteine 78, cysteine 90, and cysteine 93 each contribute to the Zn(2+) site. Positions 594, 596, and 598 each coordinate Mg(2+).

Belongs to the RNA polymerase beta' chain family. RpoC1 subfamily. In terms of assembly, in plastids the minimal PEP RNA polymerase catalytic core is composed of four subunits: alpha, beta, beta', and beta''. When a (nuclear-encoded) sigma factor is associated with the core the holoenzyme is formed, which can initiate transcription. Mg(2+) is required as a cofactor. The cofactor is Zn(2+).

The protein resides in the plastid. The protein localises to the chloroplast. It catalyses the reaction RNA(n) + a ribonucleoside 5'-triphosphate = RNA(n+1) + diphosphate. DNA-dependent RNA polymerase catalyzes the transcription of DNA into RNA using the four ribonucleoside triphosphates as substrates. This is DNA-directed RNA polymerase subunit beta' from Bigelowiella natans (Pedinomonas minutissima).